A 954-amino-acid chain; its full sequence is Protein teashirt (954 aa).

3 disordered regions span residues 20-91, 167-207, and 276-331; these read LPTA…SLPS, ESAE…PQLG, and VKGG…GSGA. Positions 47-57 are enriched in gly residues; that stretch reads HGGGAGSGGVG. The span at 292–303 shows a compositional bias: polar residues; that stretch reads SKATTPQAASQP. Residues 318–328 are compositionally biased toward gly residues; the sequence is SGGGSGGGAAG. A C2H2-type 1 zinc finger spans residues 354 to 378; sequence FRCVWCKQSFPTLEALTTHMKDSKH. Residues 383–444 form a disordered region; that stretch reads VPPFGNLPSN…YRGDPPTPLP (62 aa). Residues 417-428 are compositionally biased toward low complexity; it reads SGSASNHSPSAN. 2 C2H2-type zinc fingers span residues 466-490 and 533-557; these read LKCM…ETQH and LTCK…KNNH. 3 disordered regions span residues 563 to 622, 689 to 714, and 748 to 935; these read LQSA…DKND, FDTP…TSPV, and TSSE…NLTA. A compositionally biased stretch (basic residues) spans 568-578; it reads ARKRPAPKKRE. Residues 579–588 show a composition bias toward basic and acidic residues; the sequence is KSLPVRKLLE. The segment covering 696–712 has biased composition (low complexity); the sequence is ASLPASSPSNSSTKNTS. 2 positions are modified to phosphoserine: serine 750 and serine 758. Positions 778–807 are enriched in basic and acidic residues; that stretch reads GHDEESSKPAIKQEREAESKPVKMEIKSEF. Over residues 842 to 851 the composition is skewed to low complexity; that stretch reads PKTPSSAASP. Composition is skewed to polar residues over residues 862–885 and 893–907; these read AESQ…GSSE and DSLN…SLGS. Positions 910–926 are enriched in low complexity; that stretch reads AGANSRAKLAAAAAAGG.

This sequence belongs to the teashirt C2H2-type zinc-finger protein family. As to quaternary structure, binds arm. In terms of tissue distribution, shows a dynamic expression pattern during embryogenesis. Expressed in the embryonic trunk region (PS 3-13) with expression strongest in the thoracic segments. Expressed in a small group of cells corresponding to the anal tuft from stage 14. Strongly expressed in the embryonic ventral nerve cord. Also expressed in the proximal domain of the leg imaginal disk and in the region of the wing disk that will give rise to the proximal wing hinge. Expressed at high levels in the anterior and central embryonic midgut mesoderm and in the embryonic midgut endoderm. Expressed at a low level in more posterior visceral mesoderm of the gut. From stage 12 onwards, tsh and tio are colocalized in some cells of the CNS, trunk epidermis, hindgut and Malpighian tubules.

It is found in the nucleus. The protein localises to the cytoplasm. In terms of biological role, homeotic protein that acts downstream of Arm in the Wg cascade during embryogenesis to determine segment identity throughout the entire trunk. Acts cooperatively with other trunk homeotic proteins to repress head homeotic genes and therefore repress head segmental identity. Necessary, in combination with Scr, for the formation of the prothoracic segment. Promotes eye development in the dorsal region of the eye disk and suppresses eye development in the ventral region in combination with Wg-signaling and several early dorso-ventral eye patterning genes. Required for proper development of proximal leg segments. Has differential functions along the dorso-ventral axs of the antennal and leg disks. May play a role in wing hinge development. Possible involvement in chromatin structure for modulation of transcription. Binds DNA and can act as both a transcriptional repressor and activator. Positively regulates its own expression as well as that of Dll. Negatively regulates the expression of mod. Required for Wg-mediated transcriptional repression of Ubx in the midgut. Also represses transcription of lab in the midgut and is necessary for the proper formation of anterior and central midgut structures. Tiptop (tio) and teashirt (tsh) have, on the whole, common activities. Tio and tsh repress each other's expression and tsh has a crucial role for trunk patterning that is in part masked by ectopic expression of tiptop. Both genes share a common activity required for the activation of Ser and svb and the maintenance of en and wg. This Drosophila melanogaster (Fruit fly) protein is Protein teashirt (tsh).